A 442-amino-acid chain; its full sequence is ATP-dependent protease ATPase subunit HslU (442 aa).

ATP is bound by residues isoleucine 18, 60 to 65, aspartate 255, glutamate 320, and arginine 392; that span reads GVGKTE.

This sequence belongs to the ClpX chaperone family. HslU subfamily. A double ring-shaped homohexamer of HslV is capped on each side by a ring-shaped HslU homohexamer. The assembly of the HslU/HslV complex is dependent on binding of ATP.

The protein resides in the cytoplasm. Functionally, ATPase subunit of a proteasome-like degradation complex; this subunit has chaperone activity. The binding of ATP and its subsequent hydrolysis by HslU are essential for unfolding of protein substrates subsequently hydrolyzed by HslV. HslU recognizes the N-terminal part of its protein substrates and unfolds these before they are guided to HslV for hydrolysis. This Aeromonas hydrophila subsp. hydrophila (strain ATCC 7966 / DSM 30187 / BCRC 13018 / CCUG 14551 / JCM 1027 / KCTC 2358 / NCIMB 9240 / NCTC 8049) protein is ATP-dependent protease ATPase subunit HslU.